The following is a 131-amino-acid chain: Profilin-4 (131 aa).

Cysteine 13 and cysteine 115 are joined by a disulfide. The short motif at 81 to 97 (VVIRGKKGTGGITIKKT) is the Involved in PIP2 interaction element. At threonine 111 the chain carries Phosphothreonine.

The protein belongs to the profilin family. In terms of assembly, occurs in many kinds of cells as a complex with monomeric actin in a 1:1 ratio. In terms of processing, phosphorylated by MAP kinases. Expressed predominantly in endosperm but is also found at low levels in all tissues examined, including mature and germinated pollen.

The protein localises to the cytoplasm. Its subcellular location is the cytoskeleton. Functionally, binds to actin and affects the structure of the cytoskeleton. At high concentrations, profilin prevents the polymerization of actin, whereas it enhances it at low concentrations. By binding to PIP2, it inhibits the formation of IP3 and DG. Has a high affinity for poly-proline. In Zea mays (Maize), this protein is Profilin-4 (PRO4).